The following is a 210-amino-acid chain: Inner membrane-spanning protein YciB (210 aa).

Transmembrane regions (helical) follow at residues 12–32 (EVSP…FFFA), 53–73 (IFIA…ASWI), 78–98 (LPMM…LTLW), 115–135 (LFGA…GYVF), 148–168 (KLTI…EVIW), and 175–195 (FWVA…TLAQ).

It belongs to the YciB family.

Its subcellular location is the cell inner membrane. Functionally, plays a role in cell envelope biogenesis, maintenance of cell envelope integrity and membrane homeostasis. The sequence is that of Inner membrane-spanning protein YciB from Rhizobium meliloti (strain 1021) (Ensifer meliloti).